A 123-amino-acid polypeptide reads, in one-letter code: Small ribosomal subunit protein uS12cz/uS12cy (123 aa).

This sequence belongs to the universal ribosomal protein uS12 family. As to quaternary structure, part of the 30S ribosomal subunit.

The protein resides in the plastid. It localises to the chloroplast. Functionally, with S4 and S5 plays an important role in translational accuracy. Located at the interface of the 30S and 50S subunits. This chain is Small ribosomal subunit protein uS12cz/uS12cy (rps12-A), found in Atropa belladonna (Belladonna).